A 287-amino-acid chain; its full sequence is 4-hydroxybenzoate octaprenyltransferase (287 aa).

A run of 8 helical transmembrane segments spans residues 19 to 39 (PIGS…AADG), 43 to 63 (LHVL…GCVI), 94 to 116 (LALA…PLVI), 135 to 155 (FFAI…PMGF), 160 to 180 (GEVP…AVAY), 207 to 227 (FDVA…GWVG), 234 to 254 (ALYF…YTLI), and 269 to 286 (NNWL…DYLI).

Belongs to the UbiA prenyltransferase family. It depends on Mg(2+) as a cofactor.

Its subcellular location is the cell inner membrane. The enzyme catalyses all-trans-octaprenyl diphosphate + 4-hydroxybenzoate = 4-hydroxy-3-(all-trans-octaprenyl)benzoate + diphosphate. Its pathway is cofactor biosynthesis; ubiquinone biosynthesis. Catalyzes the prenylation of para-hydroxybenzoate (PHB) with an all-trans polyprenyl group. Mediates the second step in the final reaction sequence of ubiquinone-8 (UQ-8) biosynthesis, which is the condensation of the polyisoprenoid side chain with PHB, generating the first membrane-bound Q intermediate 3-octaprenyl-4-hydroxybenzoate. In Azoarcus sp. (strain BH72), this protein is 4-hydroxybenzoate octaprenyltransferase.